A 348-amino-acid chain; its full sequence is MSKARITYKDAGVDIDAGNTFVKLIKPLVKATSRPEVLADIGGFGGLFSLSSGKYKNPVLVSGTDGVGTKLKIAFLADRHDTIGIDLVAMCVNDIIVQGAEPLFFLDYLATAKLYPGKGAAIIKGVAEGCLQAGCALIGGETAEMPGFYAGDEYDMAGFTVGVVERDKIIDGSSITVGDKLIGLASSGLHSNGYSLARKVIMDVMGLGINDTIPGLDKSVADELLTPTRIYVKSILNLLRDFTIHGIAHITGGGLLENIPRILPNGCKAVVDKTTWQVPEIFKLIQNAGNIEEQEMFRTFNCGIGMVLSVPEKEVEEILIRLSGLNETAFVIGEIAKCDAGTECVEMV.

This sequence belongs to the AIR synthase family.

The protein resides in the cytoplasm. The catalysed reaction is 2-formamido-N(1)-(5-O-phospho-beta-D-ribosyl)acetamidine + ATP = 5-amino-1-(5-phospho-beta-D-ribosyl)imidazole + ADP + phosphate + H(+). It functions in the pathway purine metabolism; IMP biosynthesis via de novo pathway; 5-amino-1-(5-phospho-D-ribosyl)imidazole from N(2)-formyl-N(1)-(5-phospho-D-ribosyl)glycinamide: step 2/2. The polypeptide is Phosphoribosylformylglycinamidine cyclo-ligase (Geotalea daltonii (strain DSM 22248 / JCM 15807 / FRC-32) (Geobacter daltonii)).